The sequence spans 577 residues: Moesin (577 aa).

Residues P2–R295 enclose the FERM domain. Residue S74 is modified to Phosphoserine. K79 carries the post-translational modification N6-acetyllysine. K83 is subject to N6-succinyllysine. A [IL]-x-C-x-x-[DE] motif motif is present at residues I115 to E120. Y116 bears the Phosphotyrosine mark. An S-nitrosocysteine modification is found at C117. Residues K139 and K165 each carry the N6-acetyllysine modification. Positions E376–Q414 are enriched in basic and acidic residues. 2 disordered regions span residues E376–E415 and A434–V518. S407 carries the post-translational modification Phosphoserine. Acidic residues predominate over residues A476–G487. Residues A492–V518 are compositionally biased toward basic and acidic residues. Position 527 is a phosphoserine (S527). T558 carries the phosphothreonine; by ROCK2 and STK10 modification.

As to quaternary structure, binds NHERF1. In resting T-cells, part of a PAG1-NHERF1-MSN complex which is disrupted upon TCR activation. Interacts with PPP1R16B. Interacts with PDZD8. Interacts with SELPLG and SYK; mediates the activation of SYK by SELPLG. Interacts with PDPN (via cytoplasmic domain); activates RHOA and promotes epithelial-mesenchymal transition. Interacts with SPN/CD43 cytoplasmic tail, CD44 and ICAM2. Phosphorylation on Thr-558 is crucial for the formation of microvilli-like structures. Phosphorylation by ROCK2 suppresses the head-to-tail association of the N-terminal and C-terminal halves resulting in an opened conformation which is capable of actin and membrane-binding. Phosphorylation on Thr-558 by STK10 negatively regulates lymphocyte migration and polarization. In terms of processing, S-nitrosylation of Cys-117 is induced by interferon-gamma and oxidatively-modified low-densitity lipoprotein (LDL(ox)) implicating the iNOS-S100A8/9 transnitrosylase complex.

The protein resides in the cell membrane. It is found in the cytoplasm. It localises to the cytoskeleton. Its subcellular location is the apical cell membrane. The protein localises to the cell projection. The protein resides in the microvillus membrane. It is found in the microvillus. Its activity is regulated as follows. A head-to-tail association, of the N-terminal and C-terminal halves results in a closed conformation (inactive form) which is incapable of actin or membrane-binding. Its function is as follows. Probably involved in connections of major cytoskeletal structures to the plasma membrane. Plays a role in regulating the proliferation, migration, and adhesion of human lymphoid cells and participates in immunologic synapse formation. The protein is Moesin of Sus scrofa (Pig).